A 332-amino-acid chain; its full sequence is Adenosine receptor A2b (332 aa).

Topologically, residues 1 to 8 are extracellular; sequence MPLEAQDA. The helical transmembrane segment at 9–33 threads the bilayer; sequence VYVALELALAALSVTGNVLVCAAVG. At 34–43 the chain is on the cytoplasmic side; the sequence is TSSALQTPTN. A helical membrane pass occupies residues 44-67; it reads YFLVSLAAADVAVGLFAIPFAVTI. At 68–78 the chain is on the extracellular side; sequence SLGFCTDFHSC. A disulfide bridge links cysteine 78 with cysteine 170. A helical transmembrane segment spans residues 79-101; it reads LFLACFVLVLTQSSIFSLLAVAV. At 102–121 the chain is on the cytoplasmic side; sequence DRYLAVRVPLRYKSLVTGAR. A helical transmembrane segment spans residues 122–144; sequence ARGVIAALWVLAFGIGLTPFLGW. At 145–177 the chain is on the extracellular side; it reads NDRKIATNCTEPGDAATNVSCCLIRCLFENVVP. N-linked (GlcNAc...) asparagine glycosylation is found at asparagine 152 and asparagine 162. An adenosine-binding site is contributed by glutamate 173. The chain crosses the membrane as a helical span at residues 178–202; it reads MSYMVYFNFFGCVLPPLLIMLVIYV. Residues 203–234 lie on the Cytoplasmic side of the membrane; that stretch reads KIFLVACRQLQRTELMDHSRTVLQREIHAAKS. A helical transmembrane segment spans residues 235 to 258; the sequence is LALIVGIFALCWLPVHTINCASLF. Adenosine is bound at residue asparagine 253. The Extracellular segment spans residues 259-266; sequence QPTWAKVK. Residues 267–290 form a helical membrane-spanning segment; the sequence is PKWAINTAILLSHANSAVNPIVYA. Positions 278 and 279 each coordinate adenosine. Residues 291-332 lie on the Cytoplasmic side of the membrane; that stretch reads YRNRDFRYTFHKIISRYILCRTHILKSGEGQVGSQPTLQLGL. A lipid anchor (S-palmitoyl cysteine) is attached at cysteine 310.

The protein belongs to the G-protein coupled receptor 1 family.

The protein resides in the cell membrane. Receptor for adenosine. The activity of this receptor is mediated by G proteins which activate adenylyl cyclase. The protein is Adenosine receptor A2b (ADORA2B) of Bos taurus (Bovine).